Here is a 371-residue protein sequence, read N- to C-terminus: MPVLFSSRSLILSIIVPLLISIALYKLDTFDPAIVPSDAFTSSATSLPPLINDEFLTGAEFIGVGLLNIPEDIAYHKESNLIYTGCVDGWVKRVKVADSVNDSVVEDWVNTGGRPLGIAFGIHGEVIVADVHKGLLNISGDGKKTELLTDEADGVKFKLTDAVTVADNGVLYFTDASYKYTLNQLSLDMLEGKPFGRLLSFDPTTRVTKVLLKDLYFANGITISPDQTHLIFCETPMKRCSKYYISEERVEVFTQSLPGYPDNIRYDGDGHYWIALPSGVTTLWNISLKYPFLRKLTAMVAKYGVDLMFMENAGVLQVDLDGNPIAYYHDPKLSHIATCDKIGKYLYCGSLSQSHILRLDLLKYPAQNKKL.

The signal sequence occupies residues 1–25; sequence MPVLFSSRSLILSIIVPLLISIALY. N-linked (GlcNAc...) asparagine glycosylation is found at N101, N137, and N285. The residue at position 303 (Y303) is a Phosphotyrosine.

Belongs to the strictosidine synthase family.

It is found in the vacuole. This chain is Protein STRICTOSIDINE SYNTHASE-LIKE 7, found in Arabidopsis thaliana (Mouse-ear cress).